Consider the following 1091-residue polypeptide: MSEGTVKENNNEEFNAYHTLTTEEAAEFIGTSLTEGLTQDESLRRLKAVGENTLGDDTKIDYKAMVLHQVCNAMIMVLVISMAISFAVRDWITGGVISFVIAVNVLIGLVQEYKATKTMNSLKNLSSPNAHVIRNGKSETINSKDVVPGDICLVKVGDTIPADLRLIETKNFDTDESLLTGESLPVSKDANLVFGKEEETSVGDRLNLAFSSSAVVKGRAKGIVIKTALNSEIGKIAKSLQGDSGLISRDPSKSWLQNTWISTKKVTGAFLGTNVGTPLHRKLSKLAVLLFWIAVLFAIIVMASQKFDVDKRVAIYAICVALSMIPSSLVVVLTITMSVGAAVMVSRNVIVRKLDSLEALGAVNDICSDKTGTLTQGKMLARQIWIPRFGTITISNSDDPFNPNEGNVSLIPRFSPYEYSHNEDGDVGILQNFKDRLYEKDLPEDIDMDLFQKWLETATLANIATVFKDDATDCWKAHGDPTEIAIQVFATKMDLPHNALTGEKSTNQSNENDQSSLSQHNEKPGSAQFEHIAEFPFDSTVKRMSSVYYNNHNETYNIYGKGAFESIISCCSSWYGKDGVKITPLTDCDVETIRKNVYSLSNEGLRVLGFASKSFTKDQVNDDQLKNITSNRATAESDLVFLGLIGIYDPPRNETAGAVKKFHQAGINVHMLTGDFVGTAKAIAQEVGILPTNLYHYSQEIVDSMVMTGSQFDGLSEEEVDDLPVLPLVIARCSPQTKVRMIEALHRRKKFCAMTGDGVNDSPSLKMANVGIAMGINGSDVSKEASDIVLSDDNFASILNAVEEGRRMTDNIQKFVLQLLAENVAQALYLIIGLVFRDENGKSVFPLSPVEVLWIIVVTSCFPAMGLGLEKAAPDLMDRPPNDSEVGIFTWEVIIDTFAYGIIMTGSCMASFTGSLYGINSGRLGHDCDGTYNSSCRDVYRSRSAAFATMTWCALILAWEVVDMRRSFFRMHPDTDSPVKEFFRSIWGNQFLFWSIIFGFVSAFPVVYIPVINDKVFLHKPIGAEWGLAIAFTIAFWIGAELYKCGKRRYFKTQRAHNSENDLERSSKHDPFEAYSTSTTLQSEINISVKH.

Topologically, residues 1 to 63 (MSEGTVKENN…LGDDTKIDYK (63 aa)) are cytoplasmic. The helical transmembrane segment at 64 to 84 (AMVLHQVCNAMIMVLVISMAI) threads the bilayer. Residues 85–90 (SFAVRD) lie on the Extracellular side of the membrane. A helical membrane pass occupies residues 91-111 (WITGGVISFVIAVNVLIGLVQ). Residues 112–282 (EYKATKTMNS…TNVGTPLHRK (171 aa)) are Cytoplasmic-facing. The chain crosses the membrane as a helical span at residues 283–303 (LSKLAVLLFWIAVLFAIIVMA). Residues 304 to 312 (SQKFDVDKR) lie on the Extracellular side of the membrane. A helical membrane pass occupies residues 313-333 (VAIYAICVALSMIPSSLVVVL). Topologically, residues 334 to 815 (TITMSVGAAV…RRMTDNIQKF (482 aa)) are cytoplasmic. D369 serves as the catalytic 4-aspartylphosphate intermediate. Mg(2+) is bound by residues D369 and T371. Positions 371 and 483 each coordinate ATP. A disordered region spans residues 499–525 (ALTGEKSTNQSNENDQSSLSQHNEKPG). Over residues 503-519 (EKSTNQSNENDQSSLSQ) the composition is skewed to polar residues. Positions 561, 606, 673, 674, 675, 732, and 738 each coordinate ATP. Residue D757 coordinates Mg(2+). N760 contacts ATP. The chain crosses the membrane as a helical span at residues 816-836 (VLQLLAENVAQALYLIIGLVF). Residues 837 to 848 (RDENGKSVFPLS) lie on the Extracellular side of the membrane. The chain crosses the membrane as a helical span at residues 849–869 (PVEVLWIIVVTSCFPAMGLGL). Over 870 to 885 (EKAAPDLMDRPPNDSE) the chain is Cytoplasmic. Residues 886 to 906 (VGIFTWEVIIDTFAYGIIMTG) traverse the membrane as a helical segment. Residues 907–943 (SCMASFTGSLYGINSGRLGHDCDGTYNSSCRDVYRSR) are Extracellular-facing. The helical transmembrane segment at 944–964 (SAAFATMTWCALILAWEVVDM) threads the bilayer. Topologically, residues 965–991 (RRSFFRMHPDTDSPVKEFFRSIWGNQF) are cytoplasmic. A helical membrane pass occupies residues 992–1012 (LFWSIIFGFVSAFPVVYIPVI). The Extracellular portion of the chain corresponds to 1013–1021 (NDKVFLHKP). A helical membrane pass occupies residues 1022-1042 (IGAEWGLAIAFTIAFWIGAEL). The Cytoplasmic segment spans residues 1043 to 1091 (YKCGKRRYFKTQRAHNSENDLERSSKHDPFEAYSTSTTLQSEINISVKH).

It belongs to the cation transport ATPase (P-type) (TC 3.A.3) family. Type IID subfamily. Mg(2+) serves as cofactor. The active site is phosphorylated in presence of sodium or potassium and in conditions of higher pH. Not phosphorylated in presence of calcium ions.

Its subcellular location is the cell membrane. It catalyses the reaction Na(+)(in) + ATP + H2O = Na(+)(out) + ADP + phosphate + H(+). The catalysed reaction is K(+)(in) + ATP + H2O = K(+)(out) + ADP + phosphate + H(+). In terms of biological role, catalyzes the hydrolysis of ATP coupled with the export of sodium and potassium from the cell. May export potassium less efficiently. May transport other cations such as lithium. Sodium/potassium efflux ATPases are involved in salt tolerance and maintaining the membrane potential across the plasma membrane in high salinity (Na+) or alkaline (K+) environments. The polypeptide is Sodium/potassium exporting P-type ATPase 5 (Saccharomyces cerevisiae (strain ATCC 204508 / S288c) (Baker's yeast)).